The following is a 68-amino-acid chain: MKLEEIKKFVAELRGLSQEELAKKENELKKELFDLRFQAAAGQLDQTARLNEVKKQIARIKTVQSEIK.

This sequence belongs to the universal ribosomal protein uL29 family.

The polypeptide is Large ribosomal subunit protein uL29 (Streptococcus thermophilus (strain ATCC BAA-250 / LMG 18311)).